Reading from the N-terminus, the 413-residue chain is Palmitoyltransferase ZDHHC6 (413 aa).

Residues 1–24 are Cytoplasmic-facing; that stretch reads MGTFCSVVKFENLQELKRLCHWGP. The helical transmembrane segment at 25–45 threads the bilayer; sequence IIALGVIAICSAMAMIDSVLW. At 46-57 the chain is on the lumenal side; it reads YWPLHTTGGSVN. Residues 58–78 form a helical membrane-spanning segment; it reads FIMLINWTVMILYNYFNAMFV. Residues 79–143 are Cytoplasmic-facing; the sequence is GPGFVPLGWK…NCCGYQNHAS (65 aa). Residues 99–149 form the DHHC domain; the sequence is QYCKVCQAYKAPRSHHCRKCNRCVMKMDHHCPWINNCCGYQNHASFTLFLL. Cys-129 serves as the catalytic S-palmitoyl cysteine intermediate. Residues 144–164 form a helical membrane-spanning segment; it reads FTLFLLLAPLGCIHAAFIFVM. Over 165–194 the chain is Lumenal; the sequence is TMYTQLYNRLSFGWNTVKIDMSAARRDPLP. Residues 195–215 traverse the membrane as a helical segment; it reads IIPFGLAAFAATLFALGLALG. Topologically, residues 216 to 413 are cytoplasmic; sequence TTIAVGMLFF…QAPEGEKKNR (198 aa). Residues 313–398 form the SH3 domain; it reads VRSVRYKVIE…PRNCVEKCPC (86 aa). Residues Cys-328, Cys-329, and Cys-343 are each lipidated (S-palmitoyl cysteine). Residues 410 to 413 carry the Di-lysine motif motif; that stretch reads KKNR.

The protein belongs to the DHHC palmitoyltransferase family. In terms of assembly, homooligomerizes. Interacts with SELENOK. Post-translationally, palmitoylated at 3 different sites by ZDHHC16. The combination of the different palmitoylation events strongly affects the quaternary assembly of ZDHHC6, its localization, stability and function. Palmitoylation at Cys-328 accelerates the turnover of ZDHHC6. Depalmitoylated by LYPLA2.

It localises to the endoplasmic reticulum membrane. The catalysed reaction is L-cysteinyl-[protein] + hexadecanoyl-CoA = S-hexadecanoyl-L-cysteinyl-[protein] + CoA. It catalyses the reaction L-cysteinyl-[protein] + octadecanoyl-CoA = S-octadecanoyl-L-cysteinyl-[protein] + CoA. Endoplasmic reticulum palmitoyl acyltransferase that mediates palmitoylation of proteins such as AMFR, CALX, ITPR1 and TFRC. Palmitoylates calnexin (CALX), which is required for its association with the ribosome-translocon complex and efficient folding of glycosylated proteins. Mediates palmitoylation of AMFR, promoting AMFR distribution to the peripheral endoplasmic reticulum. Together with SELENOK, palmitoylates ITPR1 in immune cells, leading to regulate ITPR1 stability and function. Stearoyltransferase that mediates stearoylation of TFRC to inhibit TFRC-mediated activation of the JNK pathway and mitochondrial fragmentation. This is Palmitoyltransferase ZDHHC6 from Bos taurus (Bovine).